A 413-amino-acid chain; its full sequence is L-methionine gamma-lyase (413 aa).

Pyridoxal 5'-phosphate is bound by residues 75-77 (YGR) and 105-106 (GM). A substrate-binding site is contributed by Tyr131. Residue 218-220 (SAT) participates in pyridoxal 5'-phosphate binding. Lys221 is subject to N6-(pyridoxal phosphate)lysine. Residue Arg365 coordinates substrate. The tract at residues 388-413 (RLPETAGAGREPSRTALRLPERAADR) is disordered.

Belongs to the trans-sulfuration enzymes family. As to quaternary structure, homotetramer; dimer of active dimers. Pyridoxal 5'-phosphate serves as cofactor.

It carries out the reaction L-methionine + H2O = methanethiol + 2-oxobutanoate + NH4(+). It catalyses the reaction L-homocysteine + H2O = 2-oxobutanoate + hydrogen sulfide + NH4(+) + H(+). The enzyme catalyses L-cysteine + H2O = hydrogen sulfide + pyruvate + NH4(+) + H(+). Functionally, catalyzes the alpha,gamma-elimination of L-methionine to produce methanethiol, 2-oxobutanoate and ammonia. Is probably involved in L-methionine catabolism. Is also able to catalyze the alpha,gamma-elimination of L-homocysteine, and, to a lesser extent, the alpha,beta-elimination of L-cysteine. This is L-methionine gamma-lyase from Streptomyces avermitilis (strain ATCC 31267 / DSM 46492 / JCM 5070 / NBRC 14893 / NCIMB 12804 / NRRL 8165 / MA-4680).